The chain runs to 517 residues: Bifunctional purine biosynthesis protein PurH (517 aa).

Residues 1–151 enclose the MGS-like domain; it reads MTQERKIKRA…KNFAHVAVLC (151 aa).

Belongs to the PurH family.

It catalyses the reaction (6R)-10-formyltetrahydrofolate + 5-amino-1-(5-phospho-beta-D-ribosyl)imidazole-4-carboxamide = 5-formamido-1-(5-phospho-D-ribosyl)imidazole-4-carboxamide + (6S)-5,6,7,8-tetrahydrofolate. The enzyme catalyses IMP + H2O = 5-formamido-1-(5-phospho-D-ribosyl)imidazole-4-carboxamide. Its pathway is purine metabolism; IMP biosynthesis via de novo pathway; 5-formamido-1-(5-phospho-D-ribosyl)imidazole-4-carboxamide from 5-amino-1-(5-phospho-D-ribosyl)imidazole-4-carboxamide (10-formyl THF route): step 1/1. It participates in purine metabolism; IMP biosynthesis via de novo pathway; IMP from 5-formamido-1-(5-phospho-D-ribosyl)imidazole-4-carboxamide: step 1/1. This chain is Bifunctional purine biosynthesis protein PurH, found in Elusimicrobium minutum (strain Pei191).